The following is a 394-amino-acid chain: Elongation factor Tu (394 aa).

The tr-type G domain occupies Lys10 to Glu204. Residues Gly19–Thr26 form a G1 region. Gly19–Thr26 contributes to the GTP binding site. Thr26 serves as a coordination point for Mg(2+). Residues Gly60–Ser64 form a G2 region. The G3 stretch occupies residues Asp81–Gly84. Residues Asp81–His85 and Asn136–Asp139 contribute to the GTP site. The tract at residues Asn136–Asp139 is G4. Residues Ser174–Val176 form a G5 region.

This sequence belongs to the TRAFAC class translation factor GTPase superfamily. Classic translation factor GTPase family. EF-Tu/EF-1A subfamily. In terms of assembly, monomer.

Its subcellular location is the cytoplasm. The catalysed reaction is GTP + H2O = GDP + phosphate + H(+). In terms of biological role, GTP hydrolase that promotes the GTP-dependent binding of aminoacyl-tRNA to the A-site of ribosomes during protein biosynthesis. The chain is Elongation factor Tu from Akkermansia muciniphila (strain ATCC BAA-835 / DSM 22959 / JCM 33894 / BCRC 81048 / CCUG 64013 / CIP 107961 / Muc).